We begin with the raw amino-acid sequence, 96 residues long: Co-chaperonin GroES (96 aa).

The protein belongs to the GroES chaperonin family. Heptamer of 7 subunits arranged in a ring. Interacts with the chaperonin GroEL.

It localises to the cytoplasm. Its function is as follows. Together with the chaperonin GroEL, plays an essential role in assisting protein folding. The GroEL-GroES system forms a nano-cage that allows encapsulation of the non-native substrate proteins and provides a physical environment optimized to promote and accelerate protein folding. GroES binds to the apical surface of the GroEL ring, thereby capping the opening of the GroEL channel. The protein is Co-chaperonin GroES of Albidiferax ferrireducens (strain ATCC BAA-621 / DSM 15236 / T118) (Rhodoferax ferrireducens).